The sequence spans 138 residues: Endonuclease V (138 aa).

Threonine 2 functions as the Nucleophile; via amide nitrogen in the catalytic mechanism. Glutamate 23 serves as the catalytic Proton acceptor.

Monomer.

It carries out the reaction Cleaves the N-glycosidic bond between the 5'-pyrimidine residue in cyclobutadipyrimidine (in DNA) and the corresponding deoxy-D-ribose residue.. The catalysed reaction is 2'-deoxyribonucleotide-(2'-deoxyribose 5'-phosphate)-2'-deoxyribonucleotide-DNA = a 3'-end 2'-deoxyribonucleotide-(2,3-dehydro-2,3-deoxyribose 5'-phosphate)-DNA + a 5'-end 5'-phospho-2'-deoxyribonucleoside-DNA + H(+). Functionally, participates in the repair of UV-damaged DNA by excising pyrimidine dimers that are the major UV-lesions. DNA glycosylase activity hydrolyzes the glycosylic bond of the 5' pyrimidine of the dimer. This leaves apurinic/apyrimidic (AP) sites in the DNA. These AP sites are removed by the AP lyase activity which cleaves the intrapyrimidine phosphodiester bond. Catalysis proceeds via a protonated imine covalent intermediate between the alpha-amino group of the N-terminal threonine residue and the C1' of the deoxyribose sugar of the 5' pyrimidine at the dimer site. This chain is Endonuclease V, found in Enterobacteria phage T4 (Bacteriophage T4).